A 748-amino-acid polypeptide reads, in one-letter code: Transcription factor hmgR (748 aa).

The zn(2)-C6 fungal-type DNA-binding region spans 24 to 59 (CISCRQRKAKCDLGTGPDGLPLGPPCAKCRREQKPC). 2 disordered regions span residues 108–142 (SQED…QIDL) and 661–683 (REST…DEHA).

The protein localises to the nucleus. Transcription factor; part of the L-tyrosine degradation gene cluster that mediates the biosynthesis of the brownish pigment pyomelanin as an alternative melanin. Acts as a transcriptional activator for the genes of the tyrosine degradation cluster. In Aspergillus fumigatus (strain ATCC MYA-4609 / CBS 101355 / FGSC A1100 / Af293) (Neosartorya fumigata), this protein is Transcription factor hmgR.